Consider the following 571-residue polypeptide: MDEDLRERIEREAETAALFNALKHESDAQVGAILGPMMGENPDFRPHGDEIPGIISPVIERVNGLSDEEKRERLEELAPEKVEALAAEDEGDDRPLPELPNADAYDDVRMRLAPNPNGPWHVGHARMPAVIGTYKDRYDGWFCVRFDDTDPETKRPDLDAYGEILDAIDYLGFEPDEVVKASDRVETYYEYGRKLIKAGGAYTCSCDAESFSELKNNAEACPHRDKDIETTLSEFEAMIDGEYSAGEMVLRVRTDIEHKNPALRDWVAFRMVDTPHPREEAADYRCWPMLDFQSGIDDHEFGISHIIRGIDLQDSAKRQQFVYEYFDWEYPEVIHWGHVQIDAYDIEMSTSTIKQLIDDGELDDWDDPRAPTVASLKRRGIRGQAIVNAMVELGTSTSNVDLAMSSVYAENREFVDDEADRRFFVRDGVEKPLAGGPESASPPLHPNDEDRGRREIPVGDAVYVEPDDVPADGERVWLKGLGPVRHEDGAFVATDDDIEVVRDGAVDVVHWVPAQESVPLRLRTVDGDEAGHAEPGIETYDADDIVQFERIGFARIDRHDDEESVAYFAHP.

A 'HIGH' region motif is present at residues 114–124 (PNPNGPWHVGH). Positions 431 to 453 (KPLAGGPESASPPLHPNDEDRGR) are disordered.

This sequence belongs to the class-I aminoacyl-tRNA synthetase family. Glutamate--tRNA ligase type 2 subfamily.

It localises to the cytoplasm. The enzyme catalyses tRNA(Glu) + L-glutamate + ATP = L-glutamyl-tRNA(Glu) + AMP + diphosphate. Functionally, catalyzes the attachment of glutamate to tRNA(Glu) in a two-step reaction: glutamate is first activated by ATP to form Glu-AMP and then transferred to the acceptor end of tRNA(Glu). This is Glutamate--tRNA ligase from Natronomonas pharaonis (strain ATCC 35678 / DSM 2160 / CIP 103997 / JCM 8858 / NBRC 14720 / NCIMB 2260 / Gabara) (Halobacterium pharaonis).